The sequence spans 145 residues: Dihydrolipoyllysine-residue succinyltransferase component of 2-oxoglutarate dehydrogenase complex, mitochondrial (145 aa).

Residues I4–L31 form the Lipoyl-binding domain. A Phosphoserine modification is found at S14. N6-acetyllysine occurs at positions 36 and 66. Catalysis depends on residues H119 and D123.

This sequence belongs to the 2-oxoacid dehydrogenase family. As to quaternary structure, the 2-oxoglutarate dehydrogenase complex is composed of OGDH (2-oxoglutarate dehydrogenase; E1), DLST (dihydrolipoamide succinyltransferase; E2), DLD (dihydrolipoamide dehydrogenase; E3) and the assembly factor KGD4. It contains multiple copies of the three enzymatic components (E1, E2 and E3). In the nucleus, the 2-oxoglutarate dehydrogenase complex associates with KAT2A. Interacts with ABHD11; this interaction maintains the functional lipoylation of the 2-oxoglutarate dehydrogenase complex. The cofactor is (R)-lipoate.

The protein resides in the mitochondrion matrix. It localises to the nucleus. The catalysed reaction is N(6)-[(R)-dihydrolipoyl]-L-lysyl-[protein] + succinyl-CoA = N(6)-[(R)-S(8)-succinyldihydrolipoyl]-L-lysyl-[protein] + CoA. It participates in amino-acid degradation; L-lysine degradation via saccharopine pathway; glutaryl-CoA from L-lysine: step 6/6. It functions in the pathway carbohydrate metabolism; tricarboxylic acid cycle. Its function is as follows. Dihydrolipoamide succinyltransferase (E2) component of the 2-oxoglutarate dehydrogenase complex. The 2-oxoglutarate dehydrogenase complex catalyzes the overall conversion of 2-oxoglutarate to succinyl-CoA and CO(2). The 2-oxoglutarate dehydrogenase complex is mainly active in the mitochondrion. A fraction of the 2-oxoglutarate dehydrogenase complex also localizes in the nucleus and is required for lysine succinylation of histones: associates with KAT2A on chromatin and provides succinyl-CoA to histone succinyltransferase KAT2A. In Mesocricetus auratus (Golden hamster), this protein is Dihydrolipoyllysine-residue succinyltransferase component of 2-oxoglutarate dehydrogenase complex, mitochondrial.